A 149-amino-acid polypeptide reads, in one-letter code: UPF0179 protein Hlac_2319 (149 aa).

Belongs to the UPF0179 family.

The polypeptide is UPF0179 protein Hlac_2319 (Halorubrum lacusprofundi (strain ATCC 49239 / DSM 5036 / JCM 8891 / ACAM 34)).